The sequence spans 309 residues: MQIQFLGTGAGQPSKARNVSSLALKLLDEINQVWLFDCGEGTQNRILETTIRPRKVAKIFITHLHGDHIFGLPGFLSSRSFQSSEEQTDIDIYGPVGIRSFVLASLKVSGTRLPYRIHFHEFDVDTVGQVLETDKFTVFAEKLDHTIPCVGYRVIQKDLEGTLDAEALRAAGVPFGPLFGKIKNGQNVTLEDGTEIIASDYISPPRPGKVVTILGDTRKCHASVRLAVNADVLVHEATYGKGDEKIARKHGHSTNMEAAQVAKDAGVKQLLLNHISPRFLSKDISQLRKDASTIFEQVHIVKDLEEIEL.

Residues histidine 63, histidine 65, aspartate 67, histidine 68, histidine 145, aspartate 216, and histidine 274 each contribute to the Zn(2+) site. The active-site Proton acceptor is the aspartate 67.

This sequence belongs to the RNase Z family. As to quaternary structure, homodimer. Zn(2+) is required as a cofactor.

It carries out the reaction Endonucleolytic cleavage of RNA, removing extra 3' nucleotides from tRNA precursor, generating 3' termini of tRNAs. A 3'-hydroxy group is left at the tRNA terminus and a 5'-phosphoryl group is left at the trailer molecule.. In terms of biological role, zinc phosphodiesterase, which displays some tRNA 3'-processing endonuclease activity. Probably involved in tRNA maturation, by removing a 3'-trailer from precursor tRNA. This chain is Ribonuclease Z, found in Streptococcus suis (strain 98HAH33).